A 1416-amino-acid chain; its full sequence is Uveal autoantigen with coiled-coil domains and ankyrin repeats (1416 aa).

Met-1 carries the N-acetylmethionine modification. The tract at residues 1–24 (MKSLKSRLRRQDVPGPASSGAAAA) is disordered. ANK repeat units follow at residues 38 to 66 (LMKA…KLDV), 67 to 96 (EGRS…DITT), 100 to 129 (AGRN…PTEH), 133 to 162 (QGRT…SVNA), 166 to 195 (DGRT…DVNS), and 199 to 228 (QNRT…DISL). Coiled-coil stretches lie at residues 286–374 (VKSH…NRFK) and 438–1386 (ENEI…IYRT). Lys-1035 is covalently cross-linked (Glycyl lysine isopeptide (Lys-Gly) (interchain with G-Cter in SUMO2)).

As to quaternary structure, component of the apoptosome complex, composed of APAF1, pro-caspase-9 and UACA. In the complex, it probably interacts directly with APAF1. Interacts with LGALS3, ARF6 and ACTB. Interacts with RAB39A. As to expression, highly expressed in skeletal muscle, heart, kidney and pancreas. Expressed in choroid, retina and epidermal melanocytes. Expressed in eye muscles and thyroid follicular cells.

Its subcellular location is the nucleus. The protein localises to the cytoplasm. It is found in the cytoskeleton. Functionally, regulates APAF1 expression and plays an important role in the regulation of stress-induced apoptosis. Promotes apoptosis by regulating three pathways, apoptosome up-regulation, LGALS3/galectin-3 down-regulation and NF-kappa-B inactivation. Regulates the redistribution of APAF1 into the nucleus after proapoptotic stress. Down-regulates the expression of LGALS3 by inhibiting NFKB1. Its function is as follows. Modulates isoactin dynamics to regulate the morphological alterations required for cell growth and motility. Interaction with ARF6 may modulate cell shape and motility after injury. May be involved in multiple neurite formation. The protein is Uveal autoantigen with coiled-coil domains and ankyrin repeats (UACA) of Homo sapiens (Human).